The following is a 449-amino-acid chain: Na(+)/H(+) antiporter NhaA 1 (449 aa).

11 helical membrane-spanning segments follow: residues 32–52 (IEATSGAVLLLATVVALTLSN), 87–107 (GLMTLFFFIVALEIKREVVLG), 114–134 (MVAFSVVAAAGGMLVPMGLYL), 145–165 (GWGVVMPTDTAFVIGCLALLG), 174–194 (VFLLSLAVVDDLAAILVVAVG), 202–222 (TALALGAVGLVIIRGMALLGV), 233–253 (AIIWLAVNASGIHATIVGVIL), 318–338 (WVAFGVMPLFALANAGVSITI), 347–367 (LAVMAGFVLGKPIGVTAFAWL), 382–402 (WGGLVGGALLTGIGFTMALFI), and 417–437 (LGILAASVVSSVAGLTLLCMF).

This sequence belongs to the NhaA Na(+)/H(+) (TC 2.A.33) antiporter family.

It is found in the cell inner membrane. The catalysed reaction is Na(+)(in) + 2 H(+)(out) = Na(+)(out) + 2 H(+)(in). Its function is as follows. Na(+)/H(+) antiporter that extrudes sodium in exchange for external protons. The sequence is that of Na(+)/H(+) antiporter NhaA 1 from Acidiphilium cryptum (strain JF-5).